A 561-amino-acid chain; its full sequence is TBC1 domain family member 24 (561 aa).

Residues Lys-36 and Arg-40 each coordinate a 1,2-diacyl-sn-glycero-3-phospho-(1D-myo-inositol). Residues 45 to 236 (AQSHTLRGKV…RVFDVFLVEG (192 aa)) enclose the Rab-GAP TBC domain. A 1,2-diacyl-sn-glycero-3-phospho-(1D-myo-inositol) contacts are provided by residues Lys-238, Arg-242, and 293–297 (RLFSR). The TLDc domain maps to 343–556 (EIVSVKEMRD…IAAVEAWGFQ (214 aa)). Residues Ser-475 and Ser-482 each carry the phosphoserine modification.

Interacts with ARF6. In terms of tissue distribution, expressed in brain, particularly at the level of the cortex and the hippocampus. Expressed in the inner ear in spiral ganglion cells, a collection of neurons critical for hearing and balance.

It localises to the cell membrane. Its subcellular location is the cytoplasm. It is found in the cytoplasmic vesicle membrane. The protein localises to the presynapse. Functionally, may act as a GTPase-activating protein for Rab family protein(s). Involved in neuronal projections development, probably through a negative modulation of ARF6 function. Involved in the regulation of synaptic vesicle trafficking. The sequence is that of TBC1 domain family member 24 (Tbc1d24) from Mus musculus (Mouse).